We begin with the raw amino-acid sequence, 303 residues long: Mycothiol acetyltransferase (303 aa).

Aspartate 33 is a binding site for 1D-myo-inositol 2-(L-cysteinylamino)-2-deoxy-alpha-D-glucopyranoside. Acetyl-CoA contacts are provided by residues 78 to 80 (VVV) and 86 to 91 (RRGTGS). One can recognise an N-acetyltransferase domain in the interval 150 to 303 (VRFATYSGPH…AYAAVAPTDV (154 aa)). Residues glutamate 177, lysine 218, and glutamate 226 each contribute to the 1D-myo-inositol 2-(L-cysteinylamino)-2-deoxy-alpha-D-glucopyranoside site. 230–232 (VGV) contributes to the acetyl-CoA binding site. Residue tyrosine 269 coordinates 1D-myo-inositol 2-(L-cysteinylamino)-2-deoxy-alpha-D-glucopyranoside. 274–279 (NTAAVK) contributes to the acetyl-CoA binding site.

It belongs to the acetyltransferase family. MshD subfamily. Monomer.

It catalyses the reaction 1D-myo-inositol 2-(L-cysteinylamino)-2-deoxy-alpha-D-glucopyranoside + acetyl-CoA = mycothiol + CoA + H(+). Functionally, catalyzes the transfer of acetyl from acetyl-CoA to desacetylmycothiol (Cys-GlcN-Ins) to form mycothiol. The protein is Mycothiol acetyltransferase of Mycolicibacterium gilvum (strain PYR-GCK) (Mycobacterium gilvum (strain PYR-GCK)).